A 510-amino-acid chain; its full sequence is Histidine ammonia-lyase (510 aa).

The 5-imidazolinone (Ala-Gly) cross-link spans 143 to 145 (ASG). The residue at position 144 (S144) is a 2,3-didehydroalanine (Ser).

It belongs to the PAL/histidase family. Post-translationally, contains an active site 4-methylidene-imidazol-5-one (MIO), which is formed autocatalytically by cyclization and dehydration of residues Ala-Ser-Gly.

Its subcellular location is the cytoplasm. The enzyme catalyses L-histidine = trans-urocanate + NH4(+). The protein operates within amino-acid degradation; L-histidine degradation into L-glutamate; N-formimidoyl-L-glutamate from L-histidine: step 1/3. In Pseudomonas putida (strain ATCC 47054 / DSM 6125 / CFBP 8728 / NCIMB 11950 / KT2440), this protein is Histidine ammonia-lyase.